The chain runs to 78 residues: Putative defensin-like protein 202 (78 aa).

Positions 1 to 29 are cleaved as a signal peptide; that stretch reads MAKTQNFVCFTAVLLILILVSTEIPMIEG. Intrachain disulfides connect cysteine 44–cysteine 65, cysteine 49–cysteine 74, and cysteine 53–cysteine 76.

It belongs to the DEFL family.

The protein resides in the secreted. In Arabidopsis thaliana (Mouse-ear cress), this protein is Putative defensin-like protein 202.